Here is a 342-residue protein sequence, read N- to C-terminus: Probable allantoicase (342 aa).

Belongs to the allantoicase family.

It catalyses the reaction allantoate + H2O = (S)-ureidoglycolate + urea. The protein operates within nitrogen metabolism; (S)-allantoin degradation; (S)-ureidoglycolate from allantoate (aminidohydrolase route): step 1/1. In terms of biological role, utilization of purines as secondary nitrogen sources, when primary sources are limiting. The protein is Probable allantoicase of Schizosaccharomyces pombe (strain 972 / ATCC 24843) (Fission yeast).